The chain runs to 154 residues: Superoxide dismutase [Cu-Zn] (154 aa).

3 residues coordinate Cu cation: His-47, His-49, and His-64. Cys-58 and Cys-147 are disulfide-bonded. Residues His-64, His-72, His-81, and Asp-84 each coordinate Zn(2+). Residue His-121 participates in Cu cation binding. A substrate-binding site is contributed by Arg-144.

It belongs to the Cu-Zn superoxide dismutase family. Homodimer. Cu cation serves as cofactor. It depends on Zn(2+) as a cofactor.

The protein resides in the cytoplasm. The enzyme catalyses 2 superoxide + 2 H(+) = H2O2 + O2. Its function is as follows. Destroys radicals which are normally produced within the cells and which are toxic to biological systems. This Podospora anserina (Pleurage anserina) protein is Superoxide dismutase [Cu-Zn] (SOD1).